A 725-amino-acid chain; its full sequence is Putative oligopeptide transporter YGL114W (725 aa).

9 consecutive transmembrane segments (helical) span residues 28 to 48 (ATIA…QFGL), 134 to 154 (FREL…FAVP), 254 to 274 (IIIL…SYFV), 353 to 373 (WILW…FIVV), 449 to 469 (ISGC…LFGI), 472 to 492 (IPLY…ILGI), 564 to 584 (FCAQ…MYLC), 644 to 664 (YGYG…GIFN), and 697 to 717 (IVFS…NMLF).

This sequence belongs to the oligopeptide OPT transporter family.

The protein resides in the membrane. The protein is Putative oligopeptide transporter YGL114W of Saccharomyces cerevisiae (strain ATCC 204508 / S288c) (Baker's yeast).